Reading from the N-terminus, the 300-residue chain is Ribosomal protein L11 methyltransferase (300 aa).

S-adenosyl-L-methionine-binding residues include threonine 152, glycine 173, aspartate 195, and asparagine 234.

This sequence belongs to the methyltransferase superfamily. PrmA family.

The protein localises to the cytoplasm. It carries out the reaction L-lysyl-[protein] + 3 S-adenosyl-L-methionine = N(6),N(6),N(6)-trimethyl-L-lysyl-[protein] + 3 S-adenosyl-L-homocysteine + 3 H(+). In terms of biological role, methylates ribosomal protein L11. The polypeptide is Ribosomal protein L11 methyltransferase (Paraburkholderia xenovorans (strain LB400)).